We begin with the raw amino-acid sequence, 133 residues long: ATP synthase epsilon chain (133 aa).

This sequence belongs to the ATPase epsilon chain family. In terms of assembly, F-type ATPases have 2 components, CF(1) - the catalytic core - and CF(0) - the membrane proton channel. CF(1) has five subunits: alpha(3), beta(3), gamma(1), delta(1), epsilon(1). CF(0) has three main subunits: a, b and c.

It localises to the cell membrane. Functionally, produces ATP from ADP in the presence of a proton gradient across the membrane. This is ATP synthase epsilon chain (atpC) from Alkalihalophilus pseudofirmus (strain ATCC BAA-2126 / JCM 17055 / OF4) (Bacillus pseudofirmus).